A 423-amino-acid chain; its full sequence is Imidazolonepropionase (423 aa).

The Fe(3+) site is built by His91 and His93. Residues His91 and His93 each contribute to the Zn(2+) site. Arg100, Tyr163, and His193 together coordinate 4-imidazolone-5-propanoate. Tyr163 contacts N-formimidoyl-L-glutamate. His257 is a binding site for Fe(3+). His257 lines the Zn(2+) pocket. 4-imidazolone-5-propanoate is bound at residue Gln260. Asp331 lines the Fe(3+) pocket. Position 331 (Asp331) interacts with Zn(2+). N-formimidoyl-L-glutamate contacts are provided by Asn333 and Gly335. Thr336 is a 4-imidazolone-5-propanoate binding site.

Belongs to the metallo-dependent hydrolases superfamily. HutI family. Zn(2+) is required as a cofactor. Requires Fe(3+) as cofactor.

Its subcellular location is the cytoplasm. The catalysed reaction is 4-imidazolone-5-propanoate + H2O = N-formimidoyl-L-glutamate. The protein operates within amino-acid degradation; L-histidine degradation into L-glutamate; N-formimidoyl-L-glutamate from L-histidine: step 3/3. In terms of biological role, catalyzes the hydrolytic cleavage of the carbon-nitrogen bond in imidazolone-5-propanoate to yield N-formimidoyl-L-glutamate. It is the third step in the universal histidine degradation pathway. The chain is Imidazolonepropionase from Bdellovibrio bacteriovorus (strain ATCC 15356 / DSM 50701 / NCIMB 9529 / HD100).